The chain runs to 697 residues: Long-chain-fatty-acid--CoA ligase 6 (697 aa).

The helical; Signal-anchor for type III membrane protein transmembrane segment at 25-45 (LSATTLVSMGALAAILAYWLT) threads the bilayer. Over 46–697 (HRPKALQPPC…QIEELYSISM (652 aa)) the chain is Cytoplasmic.

The protein belongs to the ATP-dependent AMP-binding enzyme family. Mg(2+) serves as cofactor. In terms of tissue distribution, expressed predominantly in brain and, to a much lesser extent, in heart and adrenal.

It localises to the mitochondrion outer membrane. It is found in the peroxisome membrane. The protein resides in the microsome membrane. The protein localises to the endoplasmic reticulum membrane. It catalyses the reaction a long-chain fatty acid + ATP + CoA = a long-chain fatty acyl-CoA + AMP + diphosphate. The enzyme catalyses (5Z,8Z,11Z,14Z)-eicosatetraenoate + ATP + CoA = (5Z,8Z,11Z,14Z)-eicosatetraenoyl-CoA + AMP + diphosphate. The catalysed reaction is 15-hydroxy-(5Z,8Z,11Z,13E)-eicosatetraenoate + ATP + CoA = 15-hydroxy-(5Z,8Z,11Z,13E)-eicosatetraenoyl-CoA + AMP + diphosphate. It carries out the reaction 12-hydroxy-(5Z,8Z,10E,14Z)-eicosatetraenoate + ATP + CoA = 12-hydroxy-(5Z,8Z,10E,14Z)-eicosatetraenoyl-CoA + AMP + diphosphate. It catalyses the reaction 5-hydroxy-(6E,8Z,11Z,14Z)-eicosatetraenoate + ATP + CoA = 5-hydroxy-(6E,8Z,11Z,14Z)-eicosatetraenoyl-CoA + AMP + diphosphate. The enzyme catalyses hexadecanoate + ATP + CoA = hexadecanoyl-CoA + AMP + diphosphate. The catalysed reaction is (E)-hexadec-2-enoate + ATP + CoA = (2E)-hexadecenoyl-CoA + AMP + diphosphate. In terms of biological role, catalyzes the conversion of long-chain fatty acids to their active form acyl-CoA for both synthesis of cellular lipids, and degradation via beta-oxidation. Plays an important role in fatty acid metabolism in brain and the acyl-CoAs produced may be utilized exclusively for the synthesis of the brain lipid. The chain is Long-chain-fatty-acid--CoA ligase 6 from Rattus norvegicus (Rat).